The sequence spans 266 residues: Dolichol-phosphate mannosyltransferase subunit 1 (266 aa).

Positions M1 to S19 are enriched in low complexity. A disordered region spans residues M1–D31. A2 carries the N-acetylalanine modification. S3 is modified (phosphoserine). P38, Y40, E42, I69, D71, D124, A125, D126, R153, R240, and K246 together coordinate GDP-alpha-D-mannose. A Mg(2+)-binding site is contributed by D126. Residue D126 coordinates Mn(2+).

Belongs to the glycosyltransferase 2 family. As to quaternary structure, component of the dolichol-phosphate mannose (DPM) synthase complex composed of DPM1, DPM2 and DPM3; within the complex, directly interacts with DPM3. This interaction may stabilize DPM1. Mg(2+) is required as a cofactor. It depends on Mn(2+) as a cofactor. The cofactor is Ca(2+).

The protein localises to the endoplasmic reticulum. It carries out the reaction a di-trans,poly-cis-dolichyl phosphate + GDP-alpha-D-mannose = a di-trans,poly-cis-dolichyl beta-D-mannosyl phosphate + GDP. The protein operates within protein modification; protein glycosylation. Transfers mannose from GDP-mannose to dolichol monophosphate to form dolichol phosphate mannose (Dol-P-Man) which is the mannosyl donor in pathways leading to N-glycosylation, glycosyl phosphatidylinositol membrane anchoring, and O-mannosylation of proteins; catalytic subunit of the dolichol-phosphate mannose (DPM) synthase complex. The protein is Dolichol-phosphate mannosyltransferase subunit 1 (DPM1) of Cricetulus griseus (Chinese hamster).